Reading from the N-terminus, the 273-residue chain is Ribosomal RNA small subunit methyltransferase A (273 aa).

S-adenosyl-L-methionine-binding residues include asparagine 18, leucine 20, glycine 45, glutamate 66, aspartate 91, and asparagine 113.

The protein belongs to the class I-like SAM-binding methyltransferase superfamily. rRNA adenine N(6)-methyltransferase family. RsmA subfamily.

It localises to the cytoplasm. It catalyses the reaction adenosine(1518)/adenosine(1519) in 16S rRNA + 4 S-adenosyl-L-methionine = N(6)-dimethyladenosine(1518)/N(6)-dimethyladenosine(1519) in 16S rRNA + 4 S-adenosyl-L-homocysteine + 4 H(+). In terms of biological role, specifically dimethylates two adjacent adenosines (A1518 and A1519) in the loop of a conserved hairpin near the 3'-end of 16S rRNA in the 30S particle. May play a critical role in biogenesis of 30S subunits. This is Ribosomal RNA small subunit methyltransferase A from Salmonella typhimurium (strain LT2 / SGSC1412 / ATCC 700720).